The sequence spans 1007 residues: Glucose transport transcription regulator RGT1 (1007 aa).

The span at 1-11 shows a compositional bias: polar residues; that stretch reads MLSALIQNGMS. Positions 1-115 are disordered; it reads MLSALIQNGM…ESRRRSKVSR (115 aa). Over residues 21–33 the composition is skewed to low complexity; that stretch reads NNTTNGSSSTTDN. 3 stretches are compositionally biased toward polar residues: residues 42 to 65, 74 to 83, and 96 to 105; these read NTEN…SKQD, TPRSINTGAS, and VSSNVSTATT. A DNA-binding region (zn(2)-C6 fungal-type) is located at residues 117–151; that stretch reads CDQCRKKKIKCDFIEGHDINPDQSCTGCRKIGEKC. Disordered stretches follow at residues 155-224, 267-350, 399-423, and 462-496; these read RIPL…ATST, QRRP…SAIP, LQQQ…SNGG, and AEVE…QNLP. Composition is skewed to polar residues over residues 196 to 206 and 274 to 288; these read SVSNPVNAVNE and SLAS…GKTN. The segment covering 289 to 303 has biased composition (low complexity); it reads QQQPLPSQSQPQSLQ. 3 stretches are compositionally biased toward polar residues: residues 304–323, 329–339, and 404–419; these read NIGN…TFRN, QPSQDSVSEAG, and SLHS…STGI. Residues 473-489 show a composition bias toward basic residues; it reads QKKRKRSNRSSTSKKGK.

This sequence belongs to the EDS1/RGT1 family.

It is found in the nucleus. The protein localises to the cytoplasm. Glucose-responsive transcription factor that regulates expression of several glucose transporter (HXT) genes in response to glucose. In the absence of glucose, it functions as a transcriptional repressor, whereas high concentrations of glucose cause it to function as a transcriptional activator. In cells growing on low levels of glucose, has a neutral role, neither repressing nor activating transcription. This chain is Glucose transport transcription regulator RGT1 (RGT1), found in Kluyveromyces lactis (strain ATCC 8585 / CBS 2359 / DSM 70799 / NBRC 1267 / NRRL Y-1140 / WM37) (Yeast).